Here is a 391-residue protein sequence, read N- to C-terminus: Probable sugar efflux transporter (391 aa).

A run of 12 helical transmembrane segments spans residues 16-36 (VFVFSLSAFIFNTTEFVPVAL), 51-71 (VGLMITAYAWVVSLGSLPLML), 82-102 (LLFLFALFILSHILSALAWNF), 110-130 (MGIAFAHSIFWSITASLVIRV), 138-158 (QALGLLALGSSLAMILGLPLG), 170-190 (TFGVIGGVATLIALLMWKLLP), 210-230 (PLLMGIYLLVIMVISGHFTTY), 247-267 (ITTLMLFVFGLAGVVGSFLFG), 277-297 (FIAFAMVLVICPQLLLFVFKN), 300-320 (WVVFLQIFLWGIGITSLGISL), 338-358 (IYSGSYNVGIGSGALFGSIVI), and 361-381 (LGLGYIGFVGGALGLLALFWL).

It belongs to the major facilitator superfamily. SotB (TC 2.A.1.2) family.

Its subcellular location is the cell inner membrane. Functionally, involved in the efflux of sugars. The physiological role may be the reduction of the intracellular concentration of toxic sugars or sugar metabolites. This Helicobacter pylori (strain ATCC 700392 / 26695) (Campylobacter pylori) protein is Probable sugar efflux transporter.